The chain runs to 471 residues: Trigger factor (471 aa).

In terms of domain architecture, PPIase FKBP-type spans 165–244; sequence GDFVSIDLRA…VQSVKERVLP (80 aa). The tract at residues 407-471 is disordered; the sequence is VTDASGNPVD…EATAEDPAKS (65 aa). A compositionally biased stretch (acidic residues) spans 416–443; it reads DLEELVGGTEEDDVTEDATEDVTEDAAP.

Belongs to the FKBP-type PPIase family. Tig subfamily.

It localises to the cytoplasm. The catalysed reaction is [protein]-peptidylproline (omega=180) = [protein]-peptidylproline (omega=0). Functionally, involved in protein export. Acts as a chaperone by maintaining the newly synthesized protein in an open conformation. Functions as a peptidyl-prolyl cis-trans isomerase. The polypeptide is Trigger factor (Kineococcus radiotolerans (strain ATCC BAA-149 / DSM 14245 / SRS30216)).